A 244-amino-acid polypeptide reads, in one-letter code: MKFEALIGLVLVFLSEHAGVYSAKFTFTNKCPNTVWPGTLTGGGGPQLLSTGFELASGASTSLTVQAPWSGRFWGRSHCSIDSSGKFKCSTGDCGSGQISCNGAGASPPASLVELTLATNGGQDFYDVSLVDGFNLPIKLAPRGGSGDCNSTSCAANINTVCPAELSDKGSDGSVIGCKSACLALNQPQYCCTGAYGTPDTCPPTDFSKVFKNQCPQAYSYAYDDKSSTFTCFGGPNYEITFCP.

Residues 1 to 22 (MKFEALIGLVLVFLSEHAGVYS) form the signal peptide. Cystine bridges form between Cys-31–Cys-243, Cys-79–Cys-89, Cys-94–Cys-101, Cys-149–Cys-232, Cys-154–Cys-215, Cys-162–Cys-178, Cys-182–Cys-191, and Cys-192–Cys-202. Residue Asn-150 is glycosylated (N-linked (GlcNAc...) asparagine).

It belongs to the thaumatin family. Post-translationally, N-glycosylated. As to expression, style.

Its subcellular location is the secreted. The sequence is that of Thaumatin-like protein 1 (TL1) from Pyrus pyrifolia (Chinese pear).